A 142-amino-acid polypeptide reads, in one-letter code: Natriuretic peptides A (142 aa).

A signal peptide spans Met1 to Ala23. Positions Asp24–Arg112 are excised as a propeptide. The segment at Asp47 to Ser123 is disordered. The span at Trp77–Gln94 shows a compositional bias: basic and acidic residues. Cys120 and Cys136 are joined by a disulfide.

This sequence belongs to the natriuretic peptide family. In terms of processing, cleaved upon secretion to produce the functional hormone. Expressed in heart atrium and to a lower extent in heart ventricle, but not in brain.

It localises to the secreted. In terms of biological role, hormone playing a key role in cardiovascular homeostasis through regulation of natriuresis, diuresis, and vasodilation. Has a cGMP-stimulating activity. This chain is Natriuretic peptides A (nppa), found in Acipenser transmontanus (White sturgeon).